Consider the following 624-residue polypeptide: MTLFRSHLRFLFKPRFLYFQSPTGQSSRPFSTSQILRTALDMPPPPVDTTQRLAKLRELMKQNKVDVYIVPSEDSHQSEYIAPCDGRRAFISGFTGSAGCAIVSMSKAALSTDGRYFSQAAKQLDANWKLLKRGVEGVPTWEEWTAEQAENGKVVGVDPSLITAADARKLSQTLKATGGSLVGIDQNLIDIVWGDERPARPVTTITVQPVELAGKPFEEKVEALRKELATKKRSAMVISAEIYVDDSRLSPEARKQLEGKVVLKPYDAIFQASKVLAESKASASDGAASGKFLLSNKASWSLSLALGGEQNVDEVRSPITDAKAIKNDVELEGFRKCHIRDGAALIEYFAWLENALIKEGAKLDEVDGADKLYEIRKKYDLFVGNSFDTISSTGANGAIIHYKPEKSTCSVIDPKAMYLCDSGGQYKDGTTDTTRTLHFGEPTEFQKKAYALVLKGHISIDNAIFPKGTTGYAIDSFARQHLWREGLDYLHGTGHGVGSFLNVHEGPMGIGSRAQYAEVPLSAKNVLSNEPGYYEDGNFGIRLENLVICKEVETTHKFGDKPFLGFEYITMVPFCQKLLDASLLTEAERKWVNDYHAKVWEKTSPFFEKDELTLNWLKRETQPI.

Residues Asp-421, Asp-432, Glu-530, and Glu-544 each coordinate Mn(2+).

It belongs to the peptidase M24B family. Mn(2+) is required as a cofactor.

It carries out the reaction Release of any N-terminal amino acid, including proline, that is linked to proline, even from a dipeptide or tripeptide.. In terms of biological role, catalyzes the removal of a penultimate prolyl residue from the N-termini of peptides. The sequence is that of Probable Xaa-Pro aminopeptidase P (AMPP) from Arthroderma otae (strain ATCC MYA-4605 / CBS 113480) (Microsporum canis).